The chain runs to 384 residues: Gastrin-releasing peptide receptor (384 aa).

Residues 1 to 38 (MALNDCFLLNLEVDHFMHCNISSHSADLPVNDDWSHPG) lie on the Extracellular side of the membrane. A glycan (N-linked (GlcNAc...) asparagine) is linked at asparagine 20. A helical transmembrane segment spans residues 39-62 (ILYVIPAVYGVIILIGLIGNITLI). The Cytoplasmic portion of the chain corresponds to 63–76 (KIFCTVKSMRNVPN). A helical membrane pass occupies residues 77–96 (LFISSLALGDLLLLITCAPV). Over 97–114 (DASRYLADRWLFGRIGCK) the chain is Extracellular. Cysteines 113 and 196 form a disulfide. Residues 115–136 (LIPFIQLTSVGVSVFTLTALSA) form a helical membrane-spanning segment. Residues 137 to 152 (DRYKAIVRPMDIQASH) lie on the Cytoplasmic side of the membrane. Residues 153–174 (ALMKICLKAAFIWIISMLLAIP) traverse the membrane as a helical segment. Residues 175 to 208 (EAVFSDLHPFHEESTNQTFISCAPYPHSNELHPK) are Extracellular-facing. Residues 209-234 (IHSMASFLVFYVIPLSIISVYYYFIA) traverse the membrane as a helical segment. Topologically, residues 235–264 (KNLIQSAYNLPVEGNIHVKKQIESRKRLAK) are cytoplasmic. A helical membrane pass occupies residues 265-285 (TVLVFVGLFAFCWLPNHVIYL). Residues 286–298 (YRSYHYSEVDTSM) are Extracellular-facing. A helical membrane pass occupies residues 299–325 (LHFVTSICARLLAFTNSCVNPFALYLL). The Cytoplasmic portion of the chain corresponds to 326 to 384 (SKSFRKQFNTQLLCCQPGLIIRSHSTGRSTTCMTSLKSTNPSVATFSLINGNICHERYV). A lipid anchor (S-palmitoyl cysteine) is attached at cysteine 339. A Phosphoserine modification is found at serine 350.

It belongs to the G-protein coupled receptor 1 family. Highly expressed in pancreas. Also expressed in stomach, adrenal cortex and brain. In brain, expressed in cells throughout the cortex.

The protein localises to the cell membrane. Its function is as follows. Receptor for gastrin-releasing peptide (GRP). Signals via association with G proteins that activate a phosphatidylinositol-calcium second messenger system, resulting in Akt phosphorylation. Contributes to the regulation of food intake. Contributes to the perception of prurient stimuli and transmission of itch signals in the spinal cord that promote scratching behavior, but does not play a role in the perception of pain. Contributes primarily to nonhistaminergic itch sensation. In one study, shown to act in the amygdala as part of an inhibitory network which inhibits memory specifically related to learned fear. In another study, shown to contribute to disinhibition of glutamatergic cells in the auditory cortex via signaling on vasoactive intestinal peptide-expressing cells which leads to enhanced auditory fear memories. Contributes to the induction of sighing through signaling in the pre-Botzinger complex, a cluster of several thousand neurons in the ventrolateral medulla responsible for inspiration during respiratory activity. In Homo sapiens (Human), this protein is Gastrin-releasing peptide receptor (GRPR).